The following is a 179-amino-acid chain: MIKSDPDVEVYALGKHIRMSAHKARRVIDQIRGRPYEETLMILELMPYRACYPILKLVYSAAANASHNMGFNETALIISQAEVNEGTITKKLKPRARGRSFAIKRPTCHITIVLQDISKDKKYFIWLRKYGWIYKDKYTDVRERYLYMMDHMLYRNRMTWINREMIWPYRDSEVLWDKK.

This sequence belongs to the universal ribosomal protein uL22 family. As to quaternary structure, part of the 50S ribosomal subunit.

The protein localises to the plastid. It is found in the chloroplast. Functionally, this protein binds specifically to 23S rRNA. The globular domain of the protein is located near the polypeptide exit tunnel on the outside of the subunit, while an extended beta-hairpin is found that lines the wall of the exit tunnel in the center of the 70S ribosome. This chain is Large ribosomal subunit protein uL22c (rpl22), found in Ranunculus macranthus (Large buttercup).